The sequence spans 291 residues: Quinol oxidase subunit 2 (291 aa).

Residues 1–28 (MQLKKAFWKLASLLPLSLLLFLGGCDKK) form the signal peptide. 2 consecutive transmembrane segments (helical) span residues 49–69 (SFLL…VILI) and 91–111 (LEII…IPTV).

It belongs to the cytochrome c oxidase subunit 2 family.

It is found in the cell membrane. The enzyme catalyses 2 a quinol + O2 = 2 a quinone + 2 H2O. Catalyzes quinol oxidation with the concomitant reduction of oxygen to water. Subunit II transfers the electrons from a quinol to the binuclear center of the catalytic subunit I. The chain is Quinol oxidase subunit 2 from Bacillus cereus (strain ATCC 14579 / DSM 31 / CCUG 7414 / JCM 2152 / NBRC 15305 / NCIMB 9373 / NCTC 2599 / NRRL B-3711).